The primary structure comprises 716 residues: Mitogen-activated protein kinase kinase kinase 5 (716 aa).

The segment covering 1–27 has biased composition (low complexity); the sequence is MRWLPQISFSSPSSSPSSSLKPVASYS. 4 disordered regions span residues 1-42, 74-98, 119-180, and 238-302; these read MRWL…DRFH, ASTS…VPRS, AANA…YWVN, and YDIT…VTNG. Residues 31 to 40 show a composition bias toward basic and acidic residues; sequence DPDRNQDRDR. Residues 75 to 91 are compositionally biased toward polar residues; the sequence is STSSSTFDSGLTRSPSA. Basic and acidic residues predominate over residues 124-137; sequence GLDDRDRDPERLIS. 3 stretches are compositionally biased toward polar residues: residues 138-150, 162-173, and 242-251; these read DRTS…TSVN, ENSSYQDFSPRN, and AFSTDNSPIH. Residues 263-273 are compositionally biased toward low complexity; the sequence is RSPQPSRPSSP. Residues 346–607 form the Protein kinase domain; that stretch reads WKKGKLIGRG…ASMLLEHRFL (262 aa). Residues 352–360 and lysine 375 contribute to the ATP site; that span reads IGRGTFGSV. Aspartate 472 serves as the catalytic Proton acceptor. Positions 610–633 are enriched in polar residues; it reads SLQPTSPSNSDVSQLFNGMNITEP. Residues 610 to 716 are disordered; it reads SLQPTSPSNS…RRTGVTSDHL (107 aa). Phosphoserine; by PBL27 is present on residues serine 617 and serine 622. A compositionally biased stretch (basic and acidic residues) spans 634 to 648; the sequence is SSRREKPNFKLDQVP. Composition is skewed to polar residues over residues 652–661 and 674–685; these read NMTSSESESG and LTGTVNRLSPRS. Serine 658 and serine 660 each carry phosphoserine; by PBL27. Phosphothreonine; by PBL27 is present on threonine 677. Serine 685 carries the phosphoserine; by PBL27 modification. The span at 703-716 shows a compositional bias: basic and acidic residues; that stretch reads SSDRRRTGVTSDHL.

This sequence belongs to the protein kinase superfamily. STE Ser/Thr protein kinase family. MAP kinase kinase kinase subfamily. In terms of assembly, interacts with PBL27 at the plasma membrane; disassociation is induced by chitin perception by the CERK1 complex. Interacts with MKK2, MKK4, and MKK5 mainly in the cytosol. Post-translationally, phosphorylated by PBL27 during chitin-mediated signaling in a CERK1-dependent manner. Mostly expressed in flower buds. Also present in pollen, roots, leaves and seedlings, and, at low levels, in stems and immature siliques.

The protein resides in the cell membrane. It localises to the cytoplasm. The protein localises to the cytosol. The catalysed reaction is L-seryl-[protein] + ATP = O-phospho-L-seryl-[protein] + ADP + H(+). It carries out the reaction L-threonyl-[protein] + ATP = O-phospho-L-threonyl-[protein] + ADP + H(+). In terms of biological role, mitogen-activated protein kinase (MAPK) involved in the transduction of signal between the host cell surface chitin receptor complex CERK1-LYK5 and the intracellular MAPK cascade that leads to chitin-induced immunity. Phosphorylates and activates MAPK targets (e.g. MKK4, MKK5, and possibly MKK2) when phosphorylated by PBL27 after elicitation by chitin. Required for resistance to the fungus A.brassicicola. This chain is Mitogen-activated protein kinase kinase kinase 5, found in Arabidopsis thaliana (Mouse-ear cress).